The sequence spans 576 residues: Formate--tetrahydrofolate ligase 1 (576 aa).

69–76 (TPLGEGKT) is an ATP binding site.

It belongs to the formate--tetrahydrofolate ligase family.

The enzyme catalyses (6S)-5,6,7,8-tetrahydrofolate + formate + ATP = (6R)-10-formyltetrahydrofolate + ADP + phosphate. It participates in one-carbon metabolism; tetrahydrofolate interconversion. This is Formate--tetrahydrofolate ligase 1 from Rubrobacter xylanophilus (strain DSM 9941 / JCM 11954 / NBRC 16129 / PRD-1).